We begin with the raw amino-acid sequence, 942 residues long: Protein O-mannosyl-transferase TMTC1 (942 aa).

Residues Met1–Arg20 lie on the Cytoplasmic side of the membrane. The helical transmembrane segment at Cys21–Gly41 threads the bilayer. Residues Arg42–Asn109 lie on the Extracellular side of the membrane. The chain crosses the membrane as a helical span at residues Pro110–Tyr130. Topologically, residues Thr131–Arg140 are cytoplasmic. A helical transmembrane segment spans residues Gly141 to Thr157. Over Glu158–Ala159 the chain is Extracellular. Residues Val160–Leu180 form a helical membrane-spanning segment. Over Ser181–Pro196 the chain is Cytoplasmic. A helical membrane pass occupies residues Thr197–Val217. The Extracellular segment spans residues Lys218–Arg331. Positions Asn245–Gly285 are disordered. The span at Gln250–Ala266 shows a compositional bias: low complexity. A helical membrane pass occupies residues Ala332–Gly352. The Cytoplasmic segment spans residues Thr353–Arg373. The helical transmembrane segment at Phe374–Leu394 threads the bilayer. Topologically, residues Cys395–Asn414 are extracellular. A helical transmembrane segment spans residues Leu415 to Phe435. The Cytoplasmic portion of the chain corresponds to Lys436–Lys441. A helical transmembrane segment spans residues Glu442–Phe462. A topological domain (extracellular) is located at residue Arg463. Residues Val464–Phe484 traverse the membrane as a helical segment. The Cytoplasmic segment spans residues Val485–Cys498. The helical transmembrane segment at Gly499 to Val519 threads the bilayer. Topologically, residues Lys520–Thr942 are extracellular. 11 TPR repeats span residues Ala543–His576, Ala577–His607, Asn608–Phe641, Ala642–Ser675, Ser676–His709, His710–Thr742, Ala743–Gln776, Arg777–Cys810, Leu811–Asp844, Ser849–Gln882, and Ala883–Ser916.

Belongs to the TMTC family. As to quaternary structure, may interact with FAM168B.

It is found in the membrane. The protein resides in the endoplasmic reticulum. It carries out the reaction a di-trans,poly-cis-dolichyl beta-D-mannosyl phosphate + L-seryl-[protein] = 3-O-(alpha-D-mannosyl)-L-seryl-[protein] + a di-trans,poly-cis-dolichyl phosphate + H(+). The catalysed reaction is a di-trans,poly-cis-dolichyl beta-D-mannosyl phosphate + L-threonyl-[protein] = 3-O-(alpha-D-mannosyl)-L-threonyl-[protein] + a di-trans,poly-cis-dolichyl phosphate + H(+). The protein operates within protein modification; protein glycosylation. In terms of biological role, transfers mannosyl residues to the hydroxyl group of serine or threonine residues. The 4 members of the TMTC family are O-mannosyl-transferases dedicated primarily to the cadherin superfamily, each member seems to have a distinct role in decorating the cadherin domains with O-linked mannose glycans at specific regions. Also acts as O-mannosyl-transferase on other proteins such as PDIA3. The polypeptide is Protein O-mannosyl-transferase TMTC1 (Mus musculus (Mouse)).